The chain runs to 480 residues: Probable GH family 25 lysozyme 3 (480 aa).

Positions 1–20 (MNKLILSILSVLLIVSIASA) are cleaved as a signal peptide. One can recognise a Ch-type lysozyme domain in the interval 21–231 (GNGIDISSGT…STTSSSATSS (211 aa)). Active-site residues include Asp-25, Asp-114, and Glu-116. Positions 219-472 (SGSSTTSSSA…SSGSGNYTSG (254 aa)) are enriched in low complexity. Residues 219–480 (SGSSTTSSSA…SGSGNGAFLF (262 aa)) form a disordered region. Residues Asn-423, Asn-428, Asn-437, Asn-446, and Asn-468 are each glycosylated (N-linked (GlcNAc...) asparagine).

Belongs to the glycosyl hydrolase 25 family.

Its subcellular location is the secreted. It carries out the reaction Hydrolysis of (1-&gt;4)-beta-linkages between N-acetylmuramic acid and N-acetyl-D-glucosamine residues in a peptidoglycan and between N-acetyl-D-glucosamine residues in chitodextrins.. In Dictyostelium discoideum (Social amoeba), this protein is Probable GH family 25 lysozyme 3.